Here is a 269-residue protein sequence, read N- to C-terminus: Putative biopolymer transport protein ExbD (269 aa).

Over 1–40 (MASSPKAPKSHRKFQSIYHPTRPLSLWQDNQHDQGEVRIE) the chain is Cytoplasmic. A helical membrane pass occupies residues 41–61 (IIPLIDVVFCILTFFILGAVG). Over 62–269 (LSRQQAISLD…GNTVPSAPQQ (208 aa)) the chain is Periplasmic. The segment at 190–269 (NGANPGMSNF…GNTVPSAPQQ (80 aa)) is disordered. The span at 193 to 204 (NPGMSNFNNSNP) shows a compositional bias: low complexity.

This sequence belongs to the ExbD/TolR family.

It is found in the cell inner membrane. In Synechocystis sp. (strain ATCC 27184 / PCC 6803 / Kazusa), this protein is Putative biopolymer transport protein ExbD.